The following is a 305-amino-acid chain: UDP-3-O-acyl-N-acetylglucosamine deacetylase (305 aa).

Zn(2+) is bound by residues histidine 78, histidine 237, and aspartate 241. Histidine 264 serves as the catalytic Proton donor.

This sequence belongs to the LpxC family. It depends on Zn(2+) as a cofactor.

It carries out the reaction a UDP-3-O-[(3R)-3-hydroxyacyl]-N-acetyl-alpha-D-glucosamine + H2O = a UDP-3-O-[(3R)-3-hydroxyacyl]-alpha-D-glucosamine + acetate. It participates in glycolipid biosynthesis; lipid IV(A) biosynthesis; lipid IV(A) from (3R)-3-hydroxytetradecanoyl-[acyl-carrier-protein] and UDP-N-acetyl-alpha-D-glucosamine: step 2/6. Catalyzes the hydrolysis of UDP-3-O-myristoyl-N-acetylglucosamine to form UDP-3-O-myristoylglucosamine and acetate, the committed step in lipid A biosynthesis. This is UDP-3-O-acyl-N-acetylglucosamine deacetylase from Cupriavidus metallidurans (strain ATCC 43123 / DSM 2839 / NBRC 102507 / CH34) (Ralstonia metallidurans).